We begin with the raw amino-acid sequence, 99 residues long: NADH-ubiquinone oxidoreductase chain 4L (99 aa).

Transmembrane regions (helical) follow at residues 5–25 (IITA…GFII), 30–50 (ILLL…IIIC), and 65–85 (LYIL…LVLF).

This sequence belongs to the complex I subunit 4L family.

It localises to the mitochondrion membrane. It catalyses the reaction a ubiquinone + NADH + 5 H(+)(in) = a ubiquinol + NAD(+) + 4 H(+)(out). Core subunit of the mitochondrial membrane respiratory chain NADH dehydrogenase (Complex I) that is believed to belong to the minimal assembly required for catalysis. Complex I functions in the transfer of electrons from NADH to the respiratory chain. The immediate electron acceptor for the enzyme is believed to be ubiquinone. This chain is NADH-ubiquinone oxidoreductase chain 4L (ND4L), found in Allomyces macrogynus.